A 381-amino-acid polypeptide reads, in one-letter code: Adaptive-response sensory kinase SasA (381 aa).

The Histidine kinase domain maps to 154-367 (MVAHELRTPL…CFYFTVPVWD (214 aa)). A Phosphohistidine; by autocatalysis modification is found at His-157.

In terms of assembly, homooligomerizes. Interacts with KaiC. Participates in the KaiBC complex, whose core is composed of a KaiC homohexamer and 6 KaiB.

The enzyme catalyses ATP + protein L-histidine = ADP + protein N-phospho-L-histidine.. Its function is as follows. Member of the two-component regulatory system SasA/RpaA involved in genome-wide circadian gene expression. One of several clock output pathways. Participates in the Kai clock protein complex, the main circadian regulator in cyanobacteria, via its interaction with KaiC. KaiC enhances the autophosphorylation activity of SasA, which then transfers its phosphate group to RpaA to activate it. In addition to its output function, recruits fold-shifted KaiB (KaiB(fs)) to KaiC to cooperatively form the KaiB(6):KaiC(6) complex (independent of SasA kinase activity). Required for robustness of the circadian rhythm of gene expression and is involved in clock output, also required for adaptation to light/dark cycles. This chain is Adaptive-response sensory kinase SasA, found in Prochlorococcus marinus (strain SARG / CCMP1375 / SS120).